Reading from the N-terminus, the 65-residue chain is Weak toxin CM-10 (65 aa).

5 cysteine pairs are disulfide-bonded: Cys3–Cys24, Cys6–Cys11, Cys17–Cys42, Cys46–Cys57, and Cys58–Cys63.

This sequence belongs to the three-finger toxin family. Ancestral subfamily. Orphan group II sub-subfamily. As to expression, expressed by the venom gland.

It localises to the secreted. Binds with low affinity to muscular (alpha-1-beta-1-delta-epsilon/CHRNA1-CHRNB1-CHRND-CHRNE) and very low affinity to neuronal (alpha-7/CHRNA7) nicotinic acetylcholine receptor (nAChR). The polypeptide is Weak toxin CM-10 (Naja nivea (Cape cobra)).